Reading from the N-terminus, the 507-residue chain is RNA-splicing ligase RtcB homolog (507 aa).

5 residues coordinate Mn(2+): Asp121, Cys124, His229, His261, and His355. GMP is bound at residue 228-232 (NHYGE). Residues 355 to 356 (HN), 404 to 407 (GGTM), Ser411, 430 to 433 (HGSG), and Lys506 contribute to the GMP site. The active-site GMP-histidine intermediate is His430.

It belongs to the RtcB family. As to quaternary structure, catalytic component of the tRNA-splicing ligase complex. Mn(2+) is required as a cofactor.

The enzyme catalyses a 3'-end 3'-phospho-ribonucleotide-RNA + a 5'-end dephospho-ribonucleoside-RNA + GTP = a ribonucleotidyl-ribonucleotide-RNA + GMP + diphosphate. The catalysed reaction is a 3'-end 2',3'-cyclophospho-ribonucleotide-RNA + a 5'-end dephospho-ribonucleoside-RNA + GTP + H2O = a ribonucleotidyl-ribonucleotide-RNA + GMP + diphosphate + H(+). Catalytic subunit of the tRNA-splicing ligase complex that acts by directly joining spliced tRNA halves to mature-sized tRNAs by incorporating the precursor-derived splice junction phosphate into the mature tRNA as a canonical 3',5'-phosphodiester. May act as an RNA ligase with broad substrate specificity, and may function toward other RNAs. This is RNA-splicing ligase RtcB homolog from Theileria parva (East coast fever infection agent).